A 1403-amino-acid polypeptide reads, in one-letter code: DNA-directed RNA polymerase subunit beta' (1403 aa).

Zn(2+) contacts are provided by cysteine 71, cysteine 73, cysteine 86, and cysteine 89. Residues aspartate 462, aspartate 464, and aspartate 466 each contribute to the Mg(2+) site. 4 residues coordinate Zn(2+): cysteine 811, cysteine 885, cysteine 892, and cysteine 895.

The protein belongs to the RNA polymerase beta' chain family. As to quaternary structure, the RNAP catalytic core consists of 2 alpha, 1 beta, 1 beta' and 1 omega subunit. When a sigma factor is associated with the core the holoenzyme is formed, which can initiate transcription. Mg(2+) is required as a cofactor. Requires Zn(2+) as cofactor.

The enzyme catalyses RNA(n) + a ribonucleoside 5'-triphosphate = RNA(n+1) + diphosphate. DNA-dependent RNA polymerase catalyzes the transcription of DNA into RNA using the four ribonucleoside triphosphates as substrates. In Bartonella bacilliformis (strain ATCC 35685 / KC583 / Herrer 020/F12,63), this protein is DNA-directed RNA polymerase subunit beta'.